Reading from the N-terminus, the 258-residue chain is Phosphatidylglycerol--prolipoprotein diacylglyceryl transferase (258 aa).

The next 7 membrane-spanning stretches (helical) occupy residues 9–29 (ILIQ…ATGF), 53–73 (LLTY…TLIY), 90–110 (EGGL…WLFV), 117–139 (KFLW…IRLG), 169–189 (PVQL…LMLF), 198–218 (GFLF…IEYF), and 230–250 (LISV…VLML). Residue arginine 137 participates in a 1,2-diacyl-sn-glycero-3-phospho-(1'-sn-glycerol) binding.

The protein belongs to the Lgt family.

The protein resides in the cell inner membrane. The catalysed reaction is L-cysteinyl-[prolipoprotein] + a 1,2-diacyl-sn-glycero-3-phospho-(1'-sn-glycerol) = an S-1,2-diacyl-sn-glyceryl-L-cysteinyl-[prolipoprotein] + sn-glycerol 1-phosphate + H(+). Its pathway is protein modification; lipoprotein biosynthesis (diacylglyceryl transfer). In terms of biological role, catalyzes the transfer of the diacylglyceryl group from phosphatidylglycerol to the sulfhydryl group of the N-terminal cysteine of a prolipoprotein, the first step in the formation of mature lipoproteins. In Tolumonas auensis (strain DSM 9187 / NBRC 110442 / TA 4), this protein is Phosphatidylglycerol--prolipoprotein diacylglyceryl transferase.